The chain runs to 1324 residues: Sal-like protein 1 (1324 aa).

A disordered region spans residues 1–42 (MSRRKQAKPQHFQSDPEVASLPRRDGDTEKGQPSRPTKSKDA). Residues 22-42 (PRRDGDTEKGQPSRPTKSKDA) show a composition bias toward basic and acidic residues. The segment at 43-65 (HVCGRCCAEFFELSDLLLHKKNC) adopts a C2H2-type 1; atypical zinc-finger fold. Disordered regions lie at residues 77–102 (NPAS…NDTV), 108–127 (VDCS…SMEV), 132–172 (ANKS…TSAI), and 317–336 (PPIQ…SNSG). The segment covering 113–124 (LSEHNGLDREES) has biased composition (basic and acidic residues). The segment covering 135–158 (SGSGTSSGSHSSTAPSSSSSSSSS) has biased composition (low complexity). A compositionally biased stretch (polar residues) spans 321-336 (LPQSSSGNTIIPSNSG). Lys-439 is covalently cross-linked (Glycyl lysine isopeptide (Lys-Gly) (interchain with G-Cter in SUMO2)). 2 C2H2-type zinc fingers span residues 449 to 471 (HKCR…LRSH) and 477 to 499 (FKCN…FQRH). The segment at 577-646 (PIPISHSATS…ASSSVLSSPA (70 aa)) is disordered. Phosphoserine is present on residues Ser-590, Ser-593, and Ser-595. Residues 633 to 646 (SVPTASSSVLSSPA) show a composition bias toward low complexity. Residues Lys-673, Lys-690, and Lys-701 each participate in a glycyl lysine isopeptide (Lys-Gly) (interchain with G-Cter in SUMO2) cross-link. 3 C2H2-type zinc fingers span residues 706 to 728 (NECI…YRTH), 734 to 756 (FKCK…YSVH), and 766 to 788 (HSCP…IRMH). Disordered regions lie at residues 790–856 (GGQI…SSPL) and 894–963 (EGDV…LSPT). The span at 802 to 811 (YSESMESDTG) shows a compositional bias: polar residues. The span at 820-833 (DLDNFSDENMEDCP) shows a compositional bias: acidic residues. A compositionally biased stretch (low complexity) spans 843–856 (SADASQDSLSSSPL). Residues 899–936 (TNDSSSVGGDMESQSAGSPAISESTSSMQALSPSNSTQ) are compositionally biased toward polar residues. Residues 937-949 (EFHKSPSIEEKPQ) show a composition bias toward basic and acidic residues. Residues Ser-941 and Ser-943 each carry the phosphoserine modification. Residues Lys-947 and Lys-982 each participate in a glycyl lysine isopeptide (Lys-Gly) (interchain with G-Cter in SUMO2) cross-link. 2 consecutive C2H2-type zinc fingers follow at residues 1001–1023 (TACD…YRSH) and 1029–1051 (FICT…MLTH). Residue Lys-1086 forms a Glycyl lysine isopeptide (Lys-Gly) (interchain with G-Cter in SUMO2) linkage. Residues 1095-1120 (VSPQDSKDTPTSHVPSGPLSSSATSP) form a disordered region. The segment covering 1105–1119 (TSHVPSGPLSSSATS) has biased composition (polar residues). 2 consecutive C2H2-type zinc fingers follow at residues 1134 to 1156 (HYCN…ERTH) and 1162 to 1184 (FACT…MGTH). Residues Lys-1219, Lys-1299, and Lys-1319 each participate in a glycyl lysine isopeptide (Lys-Gly) (interchain with G-Cter in SUMO2) cross-link.

Belongs to the sal C2H2-type zinc-finger protein family. May associate with NuRD histone deacetylase complex (HDAC). Interacts with components of HDAC complex including HDAC1, HDAC2, RBBP4, RBPP7, MTA1 and MTA2. Interacts with CCNQ. Interacts with NSD2 (via PHD-type zinc fingers 1, 2 and 3). As to expression, highest levels in kidney. Lower levels in adult brain (enriched in corpus callosum, lower expression in substantia nigra) and liver.

It is found in the nucleus. Its function is as follows. Transcriptional repressor involved in organogenesis. Plays an essential role in ureteric bud invasion during kidney development. The protein is Sal-like protein 1 (SALL1) of Homo sapiens (Human).